The sequence spans 450 residues: Tubulin beta-6 chain (450 aa).

Positions 11, 71, 140, 144, 145, 146, 206, and 228 each coordinate GTP. Position 71 (glutamate 71) interacts with Mg(2+). Positions 429-450 are disordered; sequence DATVEDEEEYEGEEGLDENYET. Over residues 431-450 the composition is skewed to acidic residues; sequence TVEDEEEYEGEEGLDENYET.

Belongs to the tubulin family. In terms of assembly, dimer of alpha and beta chains. A typical microtubule is a hollow water-filled tube with an outer diameter of 25 nm and an inner diameter of 15 nM. Alpha-beta heterodimers associate head-to-tail to form protofilaments running lengthwise along the microtubule wall with the beta-tubulin subunit facing the microtubule plus end conferring a structural polarity. Microtubules usually have 13 protofilaments but different protofilament numbers can be found in some organisms and specialized cells. It depends on Mg(2+) as a cofactor.

It is found in the cytoplasm. The protein localises to the cytoskeleton. Tubulin is the major constituent of microtubules, a cylinder consisting of laterally associated linear protofilaments composed of alpha- and beta-tubulin heterodimers. Microtubules grow by the addition of GTP-tubulin dimers to the microtubule end, where a stabilizing cap forms. Below the cap, tubulin dimers are in GDP-bound state, owing to GTPase activity of alpha-tubulin. The sequence is that of Tubulin beta-6 chain from Gossypium hirsutum (Upland cotton).